An 809-amino-acid polypeptide reads, in one-letter code: RNA-directed RNA polymerase (809 aa).

In terms of assembly, forms a ribonucleoprotein complex with the viral RNA. Since the viral RNA is not encapsidated, ribonucleoprotein complex formation appears to be the strategy to survive in the host as persistent virus.

The protein resides in the host mitochondrion. The catalysed reaction is RNA(n) + a ribonucleoside 5'-triphosphate = RNA(n+1) + diphosphate. In terms of biological role, RNA-directed RNA polymerase that replicates the viral (+) and (-) genome. This is RNA-directed RNA polymerase from Cryphonectria parasitica mitovirus 1 (strain American chestnut tree/New Jersey/NB631) (CMV1).